The following is a 410-amino-acid chain: Chaperone protein dnaJ 15 (410 aa).

One can recognise a J domain in the interval 17–82 (DPYEVLCVSK…EKRRHYDNAG (66 aa)). A coiled-coil region spans residues 284 to 344 (AKTYEDTTEK…TVDELLKQRD (61 aa)). The disordered stretch occupies residues 351–410 (SVVKTPSGNNLSNGSSSKAQGDESKGDGDSAGEEGGTENRDKSKRKWFNLNLKGSDKKLG). The span at 357–367 (SGNNLSNGSSS) shows a compositional bias: low complexity.

Belongs to the DnaJ family. B/II subfamily. Expressed at high levels in root cap, root tip meristematic region and elongation zones, and at lower levels in mature part of roots (at protein level). Constitutively expressed in seedlings, etiolated or not, roots, rosette leaves, cauline leaves, stems, flowers, siliques and pollen.

It is found in the cytoplasm. The protein localises to the cytoskeleton. Its subcellular location is the endoplasmic reticulum membrane. The protein resides in the golgi apparatus membrane. Functionally, plays a continuous role in plant development probably in the structural organization of compartments. Seems to be involved in early gravitropic signal transduction within the gravity-perceiving cells (statocytes), where it influences pH changes and auxin distribution. Probably affects the localization and/or activity of auxin efflux carrier components (PIN proteins) or other proteins involved in lateral auxin transport. In Arabidopsis thaliana (Mouse-ear cress), this protein is Chaperone protein dnaJ 15 (ATJ15).